A 513-amino-acid polypeptide reads, in one-letter code: ATP synthase subunit alpha 2 (513 aa).

An ATP-binding site is contributed by 169 to 176 (GDRQTGKT).

It belongs to the ATPase alpha/beta chains family. As to quaternary structure, F-type ATPases have 2 components, CF(1) - the catalytic core - and CF(0) - the membrane proton channel. CF(1) has five subunits: alpha(3), beta(3), gamma(1), delta(1), epsilon(1). CF(0) has three main subunits: a(1), b(2) and c(9-12). The alpha and beta chains form an alternating ring which encloses part of the gamma chain. CF(1) is attached to CF(0) by a central stalk formed by the gamma and epsilon chains, while a peripheral stalk is formed by the delta and b chains.

The protein localises to the cell inner membrane. It catalyses the reaction ATP + H2O + 4 H(+)(in) = ADP + phosphate + 5 H(+)(out). Functionally, produces ATP from ADP in the presence of a proton gradient across the membrane. The alpha chain is a regulatory subunit. The sequence is that of ATP synthase subunit alpha 2 from Photobacterium profundum (strain SS9).